A 137-amino-acid chain; its full sequence is Type III secretion protein HrcQb (137 aa).

The segment covering 1-22 (MSTEDLYQDDVESLEDYDDETA) has biased composition (acidic residues). The interval 1 to 67 (MSTEDLYQDD…EQQAPSGLDS (67 aa)) is disordered. Residues 23 to 33 (EQEHEHEHEQQ) show a composition bias toward basic and acidic residues. The segment covering 36–58 (EPDDESEYAEAEPDDDEQEEQEE) has biased composition (acidic residues).

Belongs to the FliN/MopA/SpaO family. In terms of assembly, homotetramer. The four monomers assemble into two tightly bound homodimers. Interacts with HrcQa.

The protein resides in the cytoplasm. Component of the type III secretion system, which is required for effector protein delivery, parasitism, and pathogenicity. Probably participates in the formation of a C-ring-like assembly along with HrcQa. In Pseudomonas syringae pv. tomato (strain ATCC BAA-871 / DC3000), this protein is Type III secretion protein HrcQb (hrcQb).